Consider the following 594-residue polypeptide: Protein wntless (594 aa).

Over 1-13 (MSGTILENLSGRK) the chain is Cytoplasmic. Residues 14–34 (LSILVATLLLCQVLCFLLGGL) form a helical membrane-spanning segment. Residues 35–239 (YAPLPAGHVT…AIHQNGGFTQ (205 aa)) lie on the Lumenal side of the membrane. Asn58 carries N-linked (GlcNAc...) asparagine glycosylation. Residues 240–260 (IWLLLKTMLFPFVVGIMIWFW) form a helical membrane-spanning segment. Topologically, residues 261-270 (RRVHLLQRSP) are cytoplasmic. A helical transmembrane segment spans residues 271–291 (ALLEYMLIYLGAALTFLNLPL). At 292–311 (EYLSLVYEMPYMLLLSDIRQ) the chain is on the lumenal side. A helical transmembrane segment spans residues 312–332 (GIFYAMLLTFWLVFAGEHMLI). Residues 333–344 (QDAPNKSTIRSR) are Cytoplasmic-facing. Residues 345–365 (YWKHLSAVVVGCISLFVFDIC) traverse the membrane as a helical segment. Residues 366-390 (ERGVQLRNPFYSIWTTPLGAKVAMT) lie on the Lumenal side of the membrane. Residues 391–411 (FIVLAGVSAAIYFLFLCYMIW) traverse the membrane as a helical segment. Topologically, residues 412–473 (KVFRNIGDKR…ANESKGLIYR (62 aa)) are cytoplasmic. A helical transmembrane segment spans residues 474-494 (FKFLMLATLVCAALTVAGFIM). Over 495-514 (GQMAEGQWDWNDNVAIQPTS) the chain is Lumenal. A helical transmembrane segment spans residues 515–535 (AFLTGVYGMWNIYIFALLILY). Over 536 to 594 (APSHKQWPTMHHSDETTQSNENIVASAASEEIEFSHLPSDSNPSEISSLTSFTRKVAFD) the chain is Cytoplasmic. The interval 571–594 (HLPSDSNPSEISSLTSFTRKVAFD) is disordered. The segment covering 573-588 (PSDSNPSEISSLTSFT) has biased composition (polar residues).

It belongs to the wntless family. Interacts with wg; in the Golgi. Interacts with Vps35, a component of the retromer complex; wls stability is regulated by Vps35. In terms of tissue distribution, ubiquitously expressed in the wing imaginal disk, increased expression is observed in a stripe at the dorso-ventral boundary and other regions of the wing disk that express wg. Also expresses in the leg imaginal disk. During larval development, expression is seen in both motorneurons and muscle.

Its subcellular location is the presynaptic cell membrane. The protein localises to the postsynaptic cell membrane. It localises to the cell membrane. The protein resides in the endosome membrane. It is found in the endoplasmic reticulum membrane. Its subcellular location is the golgi apparatus membrane. Its function is as follows. A segment polarity gene required for wingless (wg)-dependent patterning processes, acting in both wg-sending cells and wg-target cells. In non-neuronal cells wls directs wg secretion. The wls traffic loop encompasses the Golgi, the cell surface, an endocytic compartment and a retrograde route leading back to the Golgi, and involves clathrin-mediated endocytosis and the retromer complex (a conserved protein complex consisting of Vps35 and Vps26). In neuronal cells (the larval motorneuron NMJ), the wg signal moves across the synapse via the release of wls-containing exosome-like vesicles. Postsynaptic wls is required for the trafficking of fz2 through the fz2-interacting protein Grip. This chain is Protein wntless, found in Drosophila melanogaster (Fruit fly).